A 62-amino-acid polypeptide reads, in one-letter code: UPF0434 protein Rpic_2808 (62 aa).

This sequence belongs to the UPF0434 family.

This chain is UPF0434 protein Rpic_2808, found in Ralstonia pickettii (strain 12J).